A 439-amino-acid polypeptide reads, in one-letter code: SET domain-containing protein 4 (439 aa).

A compositionally biased stretch (basic residues) spans 1–19; the sequence is MQRRRGRTERARKRRRRSS. Positions 1–25 are disordered; sequence MQRRRGRTERARKRRRRSSGSRAVN. Residues 47-272 enclose the SET domain; it reads TDLVPASFPG…KHQEVFICYG (226 aa). Y271 is an S-adenosyl-L-methionine binding site.

It belongs to the class V-like SAM-binding methyltransferase superfamily. SETD4 family. In terms of assembly, forms a ternary complex with TBK1 and ZNF268; the interaction with TBK1 is ZNF268-dependent and leads to TBK1 monomethylation. In terms of tissue distribution, expressed in the forebrain subventricular zone, in quiescent neural stem cells.

It is found in the cytoplasm. The protein resides in the cytosol. It localises to the nucleus. It catalyses the reaction L-lysyl(4)-[histone H3] + S-adenosyl-L-methionine = N(6)-methyl-L-lysyl(4)-[histone H3] + S-adenosyl-L-homocysteine + H(+). The catalysed reaction is N(6)-methyl-L-lysyl(4)-[histone H3] + S-adenosyl-L-methionine = N(6),N(6)-dimethyl-L-lysyl(4)-[histone H3] + S-adenosyl-L-homocysteine + H(+). It carries out the reaction L-lysyl(20)-[histone H4] + S-adenosyl-L-methionine = N(6)-methyl-L-lysyl(20)-[histone H4] + S-adenosyl-L-homocysteine + H(+). The enzyme catalyses N(6)-methyl-L-lysyl(20)-[histone H4] + S-adenosyl-L-methionine = N(6),N(6)-dimethyl-L-lysyl(20)-[histone H4] + S-adenosyl-L-homocysteine + H(+). It catalyses the reaction N(6),N(6)-dimethyl-L-lysyl(20)-[histone H4] + S-adenosyl-L-methionine = N(6),N(6),N(6)-trimethyl-L-lysyl(20)-[histone H4] + S-adenosyl-L-homocysteine + H(+). The catalysed reaction is L-lysyl-[protein] + S-adenosyl-L-methionine = N(6)-methyl-L-lysyl-[protein] + S-adenosyl-L-homocysteine + H(+). In terms of biological role, protein-lysine N-methyltransferase that methylates both histones and non-histone proteins. Via its catalytic activity, regulates many processes, including cell proliferation, cell differentiation, inflammatory response and apoptosis. Regulates the inflammatory response by mediating mono- and dimethylation of 'Lys-4' of histone H3 (H3K4me1 and H3K4me2, respectively), leading to activate the transcription of pro-inflammatory cytokines IL6 and TNF-alpha. Also involved in the regulation of stem cell quiescence by catalyzing the trimethylation of 'Lys-20' of histone H4 (H4K20me3), thereby promoting heterochromatin formation. In the brain, epigenetically controls quiescence of neural stem cells for sustaining a protected neural stem cell population and maintaining a stem cell reservoir for neurogenesis. Involved in proliferation, migration, paracrine and myogenic differentiation of bone marrow mesenchymal stem cells (BMSCs). Through the catalysis of XRCC5/Ku70 trimethylation, regulates BAX-mediated apoptosis. SETD4-catalyzed XRCC5 methylation results in XRCC5 translocation to the cytoplasm, where it interacts with BAX, sequestering it from the mitochondria, hence preventing BAX-mediated apoptosis. The sequence is that of SET domain-containing protein 4 from Mus musculus (Mouse).